A 186-amino-acid polypeptide reads, in one-letter code: Adenine phosphoribosyltransferase (186 aa).

The protein belongs to the purine/pyrimidine phosphoribosyltransferase family. As to quaternary structure, homodimer.

The protein resides in the cytoplasm. It carries out the reaction AMP + diphosphate = 5-phospho-alpha-D-ribose 1-diphosphate + adenine. Its pathway is purine metabolism; AMP biosynthesis via salvage pathway; AMP from adenine: step 1/1. Functionally, catalyzes a salvage reaction resulting in the formation of AMP, that is energically less costly than de novo synthesis. The chain is Adenine phosphoribosyltransferase from Xanthomonas oryzae pv. oryzae (strain PXO99A).